A 99-amino-acid chain; its full sequence is Aspartyl/glutamyl-tRNA(Asn/Gln) amidotransferase subunit C (99 aa).

The protein belongs to the GatC family. As to quaternary structure, heterotrimer of A, B and C subunits.

It carries out the reaction L-glutamyl-tRNA(Gln) + L-glutamine + ATP + H2O = L-glutaminyl-tRNA(Gln) + L-glutamate + ADP + phosphate + H(+). It catalyses the reaction L-aspartyl-tRNA(Asn) + L-glutamine + ATP + H2O = L-asparaginyl-tRNA(Asn) + L-glutamate + ADP + phosphate + 2 H(+). In terms of biological role, allows the formation of correctly charged Asn-tRNA(Asn) or Gln-tRNA(Gln) through the transamidation of misacylated Asp-tRNA(Asn) or Glu-tRNA(Gln) in organisms which lack either or both of asparaginyl-tRNA or glutaminyl-tRNA synthetases. The reaction takes place in the presence of glutamine and ATP through an activated phospho-Asp-tRNA(Asn) or phospho-Glu-tRNA(Gln). In Corynebacterium glutamicum (strain R), this protein is Aspartyl/glutamyl-tRNA(Asn/Gln) amidotransferase subunit C.